The following is a 480-amino-acid chain: tRNA-2-methylthio-N(6)-dimethylallyladenosine synthase (480 aa).

Residues 29–145 (GSFWIQTFGC…LEALLTQVDN (117 aa)) enclose the MTTase N-terminal domain. Cys-38, Cys-74, Cys-108, Cys-180, Cys-184, and Cys-187 together coordinate [4Fe-4S] cluster. One can recognise a Radical SAM core domain in the interval 166-403 (RDSTICAWVN…NALVERIALQ (238 aa)). The TRAM domain occupies 406–474 (SRYSGKVEQV…AFSLSGTPCE (69 aa)).

This sequence belongs to the methylthiotransferase family. MiaB subfamily. In terms of assembly, monomer. Requires [4Fe-4S] cluster as cofactor.

The protein localises to the cytoplasm. The enzyme catalyses N(6)-dimethylallyladenosine(37) in tRNA + (sulfur carrier)-SH + AH2 + 2 S-adenosyl-L-methionine = 2-methylsulfanyl-N(6)-dimethylallyladenosine(37) in tRNA + (sulfur carrier)-H + 5'-deoxyadenosine + L-methionine + A + S-adenosyl-L-homocysteine + 2 H(+). Catalyzes the methylthiolation of N6-(dimethylallyl)adenosine (i(6)A), leading to the formation of 2-methylthio-N6-(dimethylallyl)adenosine (ms(2)i(6)A) at position 37 in tRNAs that read codons beginning with uridine. In Prochlorococcus marinus (strain MIT 9313), this protein is tRNA-2-methylthio-N(6)-dimethylallyladenosine synthase.